The following is a 207-amino-acid chain: MSQQAETTDIKKKILSTGIRVGTQVKTKFMRPFITKASPEGLYMLDLDITLDKIKTAAKFINRLGVENLIVCSGRQYAETPIEKFCETLGSKKLLGRFMPGTLTNPSLPYYIEPKLVLISDPQVDEQAITEATNAGIPVIGIANTDNITSNLDVIIPANNRGRKALATVYWLLVRQILIEKGELKEEDPMNIEIDDFETKITEEEIE.

The protein belongs to the universal ribosomal protein uS2 family.

The protein is Small ribosomal subunit protein uS2 of Nitrosopumilus maritimus (strain SCM1).